The sequence spans 479 residues: Glycogen synthase (479 aa).

Lys16 contacts ADP-alpha-D-glucose.

It belongs to the glycosyltransferase 1 family. Bacterial/plant glycogen synthase subfamily.

The catalysed reaction is [(1-&gt;4)-alpha-D-glucosyl](n) + ADP-alpha-D-glucose = [(1-&gt;4)-alpha-D-glucosyl](n+1) + ADP + H(+). Its pathway is glycan biosynthesis; glycogen biosynthesis. In terms of biological role, synthesizes alpha-1,4-glucan chains using ADP-glucose. This chain is Glycogen synthase, found in Lactiplantibacillus plantarum (strain ATCC BAA-793 / NCIMB 8826 / WCFS1) (Lactobacillus plantarum).